A 314-amino-acid chain; its full sequence is MASLIGNLELPRVSPNFLELRKAVRPYLKEHVHIGLSGGPDSLALVAAVLAEKSQVTAICIDHNLQTGSAEVTHNAAAMARHMGAQAIVKSIEVAPGEGMEAAAREARYAAFAQLTDEIWVAHTMDDQAETYLLGGLRGNPAGMKDASRRPELSIIRPLLGARRAHTHGACVELGLKPWHDPQNFDDAFRRVAIRNQVIPLLAQVHGGDPVPGLALAARRAVEDAEVVEGDVEKRRLEWQDGFPVTLAGEPTGLRRRMLADFLRGEGIAVTSRKLDAIDRLLTDWRGQGGVAVGKSDNGRLEVVRQSGKLKITD.

ATP is bound at residue 37–42 (SGGPDS).

The protein belongs to the tRNA(Ile)-lysidine synthase family.

It is found in the cytoplasm. It carries out the reaction cytidine(34) in tRNA(Ile2) + L-lysine + ATP = lysidine(34) in tRNA(Ile2) + AMP + diphosphate + H(+). Ligates lysine onto the cytidine present at position 34 of the AUA codon-specific tRNA(Ile) that contains the anticodon CAU, in an ATP-dependent manner. Cytidine is converted to lysidine, thus changing the amino acid specificity of the tRNA from methionine to isoleucine. The chain is tRNA(Ile)-lysidine synthase from Corynebacterium glutamicum (strain ATCC 13032 / DSM 20300 / JCM 1318 / BCRC 11384 / CCUG 27702 / LMG 3730 / NBRC 12168 / NCIMB 10025 / NRRL B-2784 / 534).